Consider the following 175-residue polypeptide: ATP-dependent protease subunit HslV (175 aa).

T2 is an active-site residue. G158, C161, and T164 together coordinate Na(+).

This sequence belongs to the peptidase T1B family. HslV subfamily. A double ring-shaped homohexamer of HslV is capped on each side by a ring-shaped HslU homohexamer. The assembly of the HslU/HslV complex is dependent on binding of ATP.

It localises to the cytoplasm. It catalyses the reaction ATP-dependent cleavage of peptide bonds with broad specificity.. With respect to regulation, allosterically activated by HslU binding. Its function is as follows. Protease subunit of a proteasome-like degradation complex believed to be a general protein degrading machinery. The polypeptide is ATP-dependent protease subunit HslV (Haemophilus influenzae (strain 86-028NP)).